We begin with the raw amino-acid sequence, 472 residues long: Carbohydrate sulfotransferase 3 (472 aa).

The Cytoplasmic segment spans residues 1-19 (MEKGLALPQDFRDLVHSLK). A helical; Signal-anchor for type II membrane protein membrane pass occupies residues 20-38 (IRGRYVLFLAFVVIVFIFI). The Lumenal portion of the chain corresponds to 39–472 (EKENKIISRV…LEERGTFWVT (434 aa)). 3 N-linked (GlcNAc...) asparagine glycosylation sites follow: N63, N74, and N96. 3'-phosphoadenylyl sulfate is bound at residue 135 to 141 (TRTGSSF). N250 carries an N-linked (GlcNAc...) asparagine glycan. 295–303 (RDPRAVLAS) lines the 3'-phosphoadenylyl sulfate pocket. N-linked (GlcNAc...) asparagine glycans are attached at residues N413 and N457.

This sequence belongs to the sulfotransferase 1 family. Gal/GlcNAc/GalNAc subfamily. Post-translationally, N-glycosylated. Widely expressed. Highly expressed in spleen, lung, eye and stomach. Constitutively expressed at low level during the mid- to late-gestation period. Expressed in the brain in a temporally controlled manner: peaks at 2 weeks after birth in the cerebellum, but at 3 weeks in the cerebrum. Localizes to stromal cells in the bone marrow, and stromal cells in the marginal zone and red pulp of the spleen, but the sense probe did not.

The protein localises to the golgi apparatus membrane. It catalyses the reaction chondroitin beta-D-glucuronate + n 3'-phosphoadenylyl sulfate = chondroitin 6'-sulfate + n adenosine 3',5'-bisphosphate + n H(+). The catalysed reaction is 3'-phosphoadenylyl sulfate + keratan = adenosine 3',5'-bisphosphate + keratan 6'-sulfate.. Functionally, sulfotransferase that utilizes 3'-phospho-5'-adenylyl sulfate (PAPS) as sulfonate donor to catalyze the transfer of sulfate to position 6 of the N-acetylgalactosamine (GalNAc) residue of chondroitin. Chondroitin sulfate constitutes the predominant proteoglycan present in cartilage and is distributed on the surfaces of many cells and extracellular matrices. Catalyzes with a lower efficiency the sulfation of Gal residues of keratan sulfate, another glycosaminoglycan. Can also catalyze the sulfation of the Gal residues in sialyl N-acetyllactosamine (sialyl LacNAc) oligosaccharides. May play a role in the maintenance of naive T-lymphocytes in the spleen. The chain is Carbohydrate sulfotransferase 3 (Chst3) from Mus musculus (Mouse).